The following is a 361-amino-acid chain: UDP-D-xylose:L-fucose alpha-1,3-D-xylosyltransferase 1 (361 aa).

A disordered region spans residues Met-1 to Ser-21. The Cytoplasmic segment spans residues Met-1 to Asn-34. The span at Ser-11–Ser-21 shows a compositional bias: low complexity. The chain crosses the membrane as a helical; Signal-anchor for type II membrane protein span at residues Gly-35–Gly-55. Residues Ser-56–Glu-361 are Lumenal-facing. 2 N-linked (GlcNAc...) asparagine glycosylation sites follow: Asn-92 and Asn-167. A DXD motif motif is present at residues Asp-190–Asp-192. 2 N-linked (GlcNAc...) asparagine glycosylation sites follow: Asn-222 and Asn-286.

Belongs to the glycosyltransferase 77 family. It depends on Mn(2+) as a cofactor. Mg(2+) is required as a cofactor. In terms of processing, glycosylated. Expressed in roots, rosette leaves, cauline leaves and stems.

It is found in the golgi apparatus membrane. Catalyzes the transfer of D-xylose from UDP-alpha-D-xylose onto L-fucose. Probably involved in the biosynthesis of rhamnogalacturonan II (RG-II) through xylosylation of the internal fucose moiety of the A-chain of RG-II, a structurally complex pectic polysaccharide of the primary cell wall. RG-II is essential for the cell wall integrity of rapidly growing tissues such as roots and pollen tube growth and elongation. The chain is UDP-D-xylose:L-fucose alpha-1,3-D-xylosyltransferase 1 from Arabidopsis thaliana (Mouse-ear cress).